We begin with the raw amino-acid sequence, 71 residues long: Beta-defensin 25 (71 aa).

An N-terminal signal peptide occupies residues 1–22 (MAKWILLIVALLVLSHVPPGST). Disulfide bonds link cysteine 27-cysteine 54, cysteine 34-cysteine 48, and cysteine 38-cysteine 55.

The protein belongs to the beta-defensin family.

It is found in the secreted. Functionally, has antibacterial activity. The polypeptide is Beta-defensin 25 (Defb25) (Mus musculus (Mouse)).